Reading from the N-terminus, the 192-residue chain is Urease accessory protein UreE (192 aa).

The interval 170 to 192 (EHHGHSHSHSHDHVHDEKCGHKH) is disordered. Basic and acidic residues predominate over residues 178–192 (HSHDHVHDEKCGHKH).

It belongs to the UreE family.

The protein resides in the cytoplasm. Functionally, involved in urease metallocenter assembly. Binds nickel. Probably functions as a nickel donor during metallocenter assembly. In Cupriavidus necator (strain ATCC 17699 / DSM 428 / KCTC 22496 / NCIMB 10442 / H16 / Stanier 337) (Ralstonia eutropha), this protein is Urease accessory protein UreE.